The following is a 408-amino-acid chain: Peptidase T (408 aa).

H78 contributes to the Zn(2+) binding site. D80 is a catalytic residue. Position 141 (D141) interacts with Zn(2+). The active-site Proton acceptor is E175. Zn(2+) is bound by residues E176, D198, and H380.

This sequence belongs to the peptidase M20B family. Zn(2+) is required as a cofactor.

It localises to the cytoplasm. The catalysed reaction is Release of the N-terminal residue from a tripeptide.. In terms of biological role, cleaves the N-terminal amino acid of tripeptides. This is Peptidase T from Halothermothrix orenii (strain H 168 / OCM 544 / DSM 9562).